The primary structure comprises 446 residues: tRNA-2-methylthio-N(6)-dimethylallyladenosine synthase (446 aa).

The MTTase N-terminal domain occupies 8 to 124; that stretch reads KTYRVKSFGC…LPGMIDAAVA (117 aa). [4Fe-4S] cluster-binding residues include Cys17, Cys53, Cys87, Cys160, Cys164, and Cys167. One can recognise a Radical SAM core domain in the interval 146–378; the sequence is RKSAPSAFLT…QAALNRDQAA (233 aa). Residues 381 to 442 form the TRAM domain; the sequence is AGSVGRTCEV…PNSLAGQLLE (62 aa).

This sequence belongs to the methylthiotransferase family. MiaB subfamily. As to quaternary structure, monomer. [4Fe-4S] cluster serves as cofactor.

The protein localises to the cytoplasm. It catalyses the reaction N(6)-dimethylallyladenosine(37) in tRNA + (sulfur carrier)-SH + AH2 + 2 S-adenosyl-L-methionine = 2-methylsulfanyl-N(6)-dimethylallyladenosine(37) in tRNA + (sulfur carrier)-H + 5'-deoxyadenosine + L-methionine + A + S-adenosyl-L-homocysteine + 2 H(+). Its function is as follows. Catalyzes the methylthiolation of N6-(dimethylallyl)adenosine (i(6)A), leading to the formation of 2-methylthio-N6-(dimethylallyl)adenosine (ms(2)i(6)A) at position 37 in tRNAs that read codons beginning with uridine. The sequence is that of tRNA-2-methylthio-N(6)-dimethylallyladenosine synthase from Erythrobacter litoralis (strain HTCC2594).